We begin with the raw amino-acid sequence, 328 residues long: Arabinose 5-phosphate isomerase KdsD (328 aa).

Residues 41-184 (ACEKMFNCTG…AVALLKARGF (144 aa)) form the SIS domain. Residues 75–76 (GT), His82, His88, 114–123 (ALIPVLKRLH), and 148–150 (KVP) contribute to the substrate site. His82 serves as a coordination point for Zn(2+). Positions 210–268 (MHTGDEIPHVNKHATLRDALLEITRKNLGMTVICDESMKIDGIFTDGDLRRMFDMGGDM) constitute a CBS 1 domain. Substrate is bound at residue Glu275. Positions 277-328 (MTPGGIRVRPGILAVDALNLMQSRHITSVLVADGDQLLGVLHMHDLLRAGVV) constitute a CBS 2 domain.

The protein belongs to the SIS family. GutQ/KpsF subfamily. Homotetramer.

It catalyses the reaction D-arabinose 5-phosphate = D-ribulose 5-phosphate. The protein operates within carbohydrate biosynthesis; 3-deoxy-D-manno-octulosonate biosynthesis; 3-deoxy-D-manno-octulosonate from D-ribulose 5-phosphate: step 1/3. Its pathway is bacterial outer membrane biogenesis; lipopolysaccharide biosynthesis. Functionally, involved in the biosynthesis of 3-deoxy-D-manno-octulosonate (KDO), a unique 8-carbon sugar component of lipopolysaccharides (LPSs). Catalyzes the reversible aldol-ketol isomerization between D-ribulose 5-phosphate (Ru5P) and D-arabinose 5-phosphate (A5P). The polypeptide is Arabinose 5-phosphate isomerase KdsD (kdsD) (Salmonella typhi).